The sequence spans 472 residues: 3-isopropylmalate dehydratase large subunit (472 aa).

The [4Fe-4S] cluster site is built by Cys349, Cys409, and Cys412.

It belongs to the aconitase/IPM isomerase family. LeuC type 1 subfamily. As to quaternary structure, heterodimer of LeuC and LeuD. Requires [4Fe-4S] cluster as cofactor.

It catalyses the reaction (2R,3S)-3-isopropylmalate = (2S)-2-isopropylmalate. It functions in the pathway amino-acid biosynthesis; L-leucine biosynthesis; L-leucine from 3-methyl-2-oxobutanoate: step 2/4. Its function is as follows. Catalyzes the isomerization between 2-isopropylmalate and 3-isopropylmalate, via the formation of 2-isopropylmaleate. The sequence is that of 3-isopropylmalate dehydratase large subunit from Rhodospirillum rubrum (strain ATCC 11170 / ATH 1.1.1 / DSM 467 / LMG 4362 / NCIMB 8255 / S1).